A 142-amino-acid polypeptide reads, in one-letter code: Small ribosomal subunit protein uS12 (142 aa).

This sequence belongs to the universal ribosomal protein uS12 family. In terms of assembly, part of the 30S ribosomal subunit.

Functionally, with S4 and S5 plays an important role in translational accuracy. Located at the interface of the 30S and 50S subunits. This Methanocorpusculum labreanum (strain ATCC 43576 / DSM 4855 / Z) protein is Small ribosomal subunit protein uS12.